The chain runs to 461 residues: Cysteine--tRNA ligase (461 aa).

Residue cysteine 28 participates in Zn(2+) binding. Residues 30-40 carry the 'HIGH' region motif; the sequence is VTIYDLCHIGH. Zn(2+) is bound by residues cysteine 211, histidine 236, and glutamate 240. The 'KMSKS' region signature appears at 268–272; it reads KMSKS. Lysine 271 lines the ATP pocket.

It belongs to the class-I aminoacyl-tRNA synthetase family. Monomer. It depends on Zn(2+) as a cofactor.

It localises to the cytoplasm. The enzyme catalyses tRNA(Cys) + L-cysteine + ATP = L-cysteinyl-tRNA(Cys) + AMP + diphosphate. The polypeptide is Cysteine--tRNA ligase (Aliivibrio fischeri (strain ATCC 700601 / ES114) (Vibrio fischeri)).